Reading from the N-terminus, the 143-residue chain is Transcriptional regulator MraZ (143 aa).

2 consecutive SpoVT-AbrB domains span residues 6–49 (TYNH…NEAE) and 78–121 (SDET…DLKV).

It belongs to the MraZ family. As to quaternary structure, forms oligomers.

The protein resides in the cytoplasm. It localises to the nucleoid. In Spiroplasma kunkelii, this protein is Transcriptional regulator MraZ.